Consider the following 60-residue polypeptide: Large ribosomal subunit protein bL33 (60 aa).

It belongs to the bacterial ribosomal protein bL33 family.

This is Large ribosomal subunit protein bL33 from Pelodictyon phaeoclathratiforme (strain DSM 5477 / BU-1).